A 742-amino-acid chain; its full sequence is MRSKLGTHFKKASVISGSVTQSKVNQSTFSRSIIGTSSRKSLNLHAESKMGERNLSMVSKQSIKIFDDDGKDVSPQPLFQAEPGTVPQKQNKLFTPPDASGIGASDIFSSISLQHTAFNASFVGPFTRSTFGASTVSRSSKETESMTEDIEETGFKREIASLSEIQGKQHEMQPTEEDLDKIINIFLTDTETLWLLDMPPALTATDSENADLVRVRNQAYEDLCKDKVGNDKYIERMMQTFSGAPKNKEVQCDRIILEDTGVMASVWDLYDSYLSPESLPMKEAVDRAIETKNISSSRLSESRGTQSMNSLGRGDSFSSSIADIERLALTRIPDEVEPDSEEILKSEKFLQDLFFMERVVVENTFQSRLAAYRQLPVIADPDEDEDKISAMPSNIVSPSLNRLWSFACDVTKGHNVSSMSWNKKNSDLLAVGYGQFGFAEQKGGMACCWSLKNIMWPERIFHCECGVTAVDFSAVHPNLLAVGMYNGTVAIYNVQNNEDFPVLDSSDNPNKHTSPVWQLKWIEHDRGNLGDDKGEILVSVCADGRITRWHIRKGLDCNDLMKLKRTGSGKSKKSSNEKERKGEAFISRQAPGMCFDFLPKDSNIYLAGTEEGHIHKCSCSYNEQFLDTYRGHKGPVYKIVWSPFCPDVFLSCSADWCIHLWQQDVLLPILTFSNTTNAVYDIMWSPSSALMFGAVSENRVEIWDLGVSIIDPVIVNEANPGVKLTSILFAKNTDCVLIGDSD.

WD repeat units follow at residues 462 to 502 (HCEC…DFPV), 511 to 559 (KHTS…DCND), 631 to 671 (GHKG…PILT), and 674 to 713 (NTTNAVYDIMWSPSSALMFGAVSENRVEIWDLGVSIIDPV).

As to quaternary structure, part of the multisubunit axonemal dynein complex formed at least of two heavy chains and a number of intermediate and light chains. Associated with axonemal dynein subunits such as, DNAH2, DNAI3, and DYNLT1.

The protein resides in the cytoplasm. It is found in the cytoskeleton. It localises to the flagellum axoneme. Its subcellular location is the cilium axoneme. The protein localises to the dynein axonemal particle. Its function is as follows. Plays a critical role in the assembly of axonemal dynein complex, thereby playing a role in ciliary motility. This chain is Dynein axonemal intermediate chain 4, found in Xenopus laevis (African clawed frog).